Here is a 474-residue protein sequence, read N- to C-terminus: Glycogen synthase (474 aa).

Lys-15 lines the ADP-alpha-D-glucose pocket.

Belongs to the glycosyltransferase 1 family. Bacterial/plant glycogen synthase subfamily.

The catalysed reaction is [(1-&gt;4)-alpha-D-glucosyl](n) + ADP-alpha-D-glucose = [(1-&gt;4)-alpha-D-glucosyl](n+1) + ADP + H(+). The protein operates within glycan biosynthesis; glycogen biosynthesis. Its function is as follows. Synthesizes alpha-1,4-glucan chains using ADP-glucose. The polypeptide is Glycogen synthase (Chlamydia trachomatis serovar L2b (strain UCH-1/proctitis)).